Consider the following 71-residue polypeptide: Cytochrome c oxidase subunit 7, mitochondrial (71 aa).

The Mitochondrial matrix portion of the chain corresponds to 1-35 (MPGLVNAPNHVPEKQRYYQQAFKNHTRLWKIGPRS). A helical transmembrane segment spans residues 36–58 (GIIMTTFNIAMWGTFGASMYAMS). The Mitochondrial intermembrane segment spans residues 59-71 (RKVLGYNTWFSED).

It belongs to the cytochrome c oxidase VIIa family. As to quaternary structure, component of the cytochrome c oxidase (complex IV, CIV), a multisubunit enzyme composed of 11 subunits. The complex is composed of a catalytic core of 3 subunits Cox1, Cox2 and Cox3, encoded in the mitochondrial DNA, and 8 supernumerary subunits Cox4, Cox5a/Cox5, Cox6, Cox7, Cox8, Cox7a/Cox9, Cox6b/Cox12 and Cox6a/Cox13, which are encoded in the nuclear genome. The complex exists as a monomer or a dimer and forms respiratory supercomplexes (SCs) in the inner mitochondrial membrane with NADH-ubiquinone oxidoreductase (complex I, CI) and ubiquinol-cytochrome c oxidoreductase (cytochrome b-c1 complex, complex III, CIII), resulting in various different assemblies (supercomplexes I(1)IV(1), I(1)III(3)IV(2), III(2)IV(1) and III(2)IV(2) as well as larger supercomplexes of compositions like I(1)III(2)IV(5-6)).

It localises to the mitochondrion inner membrane. It functions in the pathway energy metabolism; oxidative phosphorylation. Its function is as follows. Component of the cytochrome c oxidase, the last enzyme in the mitochondrial electron transport chain which drives oxidative phosphorylation. The respiratory chain contains 3 multisubunit complexes succinate dehydrogenase (complex II, CII), ubiquinol-cytochrome c oxidoreductase (cytochrome b-c1 complex, complex III, CIII) and cytochrome c oxidase (complex IV, CIV), that cooperate to transfer electrons derived from NADH and succinate to molecular oxygen, creating an electrochemical gradient over the inner membrane that drives transmembrane transport and the ATP synthase. Cytochrome c oxidase is the component of the respiratory chain that catalyzes the reduction of oxygen to water. Electrons originating from reduced cytochrome c in the intermembrane space (IMS) are transferred via the dinuclear copper A center (CU(A)) of Cox2 and heme A of Cox1 to the active site in Cox1, a binuclear center (BNC) formed by heme A3 and copper B (CU(B)). The BNC reduces molecular oxygen to 2 water molecules using 4 electrons from cytochrome c in the IMS and 4 protons from the mitochondrial matrix. The protein is Cytochrome c oxidase subunit 7, mitochondrial of Neurospora crassa (strain ATCC 24698 / 74-OR23-1A / CBS 708.71 / DSM 1257 / FGSC 987).